Reading from the N-terminus, the 367-residue chain is UDP-N-acetylglucosamine--N-acetylmuramyl-(pentapeptide) pyrophosphoryl-undecaprenol N-acetylglucosamine transferase (367 aa).

Residues 15 to 17 (TGG), N127, R163, S191, I249, and Q294 each bind UDP-N-acetyl-alpha-D-glucosamine.

It belongs to the glycosyltransferase 28 family. MurG subfamily.

Its subcellular location is the cell inner membrane. The enzyme catalyses di-trans,octa-cis-undecaprenyl diphospho-N-acetyl-alpha-D-muramoyl-L-alanyl-D-glutamyl-meso-2,6-diaminopimeloyl-D-alanyl-D-alanine + UDP-N-acetyl-alpha-D-glucosamine = di-trans,octa-cis-undecaprenyl diphospho-[N-acetyl-alpha-D-glucosaminyl-(1-&gt;4)]-N-acetyl-alpha-D-muramoyl-L-alanyl-D-glutamyl-meso-2,6-diaminopimeloyl-D-alanyl-D-alanine + UDP + H(+). The protein operates within cell wall biogenesis; peptidoglycan biosynthesis. Functionally, cell wall formation. Catalyzes the transfer of a GlcNAc subunit on undecaprenyl-pyrophosphoryl-MurNAc-pentapeptide (lipid intermediate I) to form undecaprenyl-pyrophosphoryl-MurNAc-(pentapeptide)GlcNAc (lipid intermediate II). This chain is UDP-N-acetylglucosamine--N-acetylmuramyl-(pentapeptide) pyrophosphoryl-undecaprenol N-acetylglucosamine transferase, found in Burkholderia ambifaria (strain MC40-6).